Consider the following 837-residue polypeptide: Translation initiation factor IF-2 (837 aa).

Disordered regions lie at residues 1–44 (MTEK…VRKS) and 62–251 (KAQE…TKPA). 2 stretches are compositionally biased toward basic and acidic residues: residues 62 to 102 (KAQE…EAKP) and 111 to 165 (ADPE…HNDS). Basic residues predominate over residues 189-205 (RENHIRTGKNKVTKAKK). Basic and acidic residues predominate over residues 206-229 (GGRDDNGSKDERSADRRNQKDMRG). Residues 242-251 (TLQQAFTKPA) are compositionally biased toward polar residues. One can recognise a tr-type G domain in the interval 337-506 (QRAPVVTIMG…LLQSEVLELT (170 aa)). The tract at residues 346 to 353 (GHVDHGKT) is G1. 346 to 353 (GHVDHGKT) is a binding site for GTP. Residues 371-375 (GITQH) are G2. The interval 392-395 (DTPG) is G3. Residues 392-396 (DTPGH) and 446-449 (NKID) contribute to the GTP site. The G4 stretch occupies residues 446–449 (NKID). The tract at residues 482–484 (SAK) is G5.

Belongs to the TRAFAC class translation factor GTPase superfamily. Classic translation factor GTPase family. IF-2 subfamily.

The protein localises to the cytoplasm. In terms of biological role, one of the essential components for the initiation of protein synthesis. Protects formylmethionyl-tRNA from spontaneous hydrolysis and promotes its binding to the 30S ribosomal subunits. Also involved in the hydrolysis of GTP during the formation of the 70S ribosomal complex. In Actinobacillus succinogenes (strain ATCC 55618 / DSM 22257 / CCUG 43843 / 130Z), this protein is Translation initiation factor IF-2.